A 322-amino-acid chain; its full sequence is ATP-dependent 6-phosphofructokinase (322 aa).

Residue G12 coordinates ATP. Residue 22–26 (RATAK) participates in ADP binding. Residues 73-74 (RS) and 103-106 (GDGS) contribute to the ATP site. D104 contacts Mg(2+). 127 to 129 (TID) is a binding site for substrate. The active-site Proton acceptor is the D129. Residue R156 participates in ADP binding. Substrate is bound by residues R164 and 171–173 (MGR). Residues 187–189 (GGD) and 215–217 (KLH) each bind ADP. Residues E224, R245, and 251–254 (HIQR) each bind substrate.

Belongs to the phosphofructokinase type A (PFKA) family. ATP-dependent PFK group I subfamily. Prokaryotic clade 'B1' sub-subfamily. Homotetramer. The cofactor is Mg(2+).

It localises to the cytoplasm. It carries out the reaction beta-D-fructose 6-phosphate + ATP = beta-D-fructose 1,6-bisphosphate + ADP + H(+). The protein operates within carbohydrate degradation; glycolysis; D-glyceraldehyde 3-phosphate and glycerone phosphate from D-glucose: step 3/4. With respect to regulation, allosterically activated by ADP and other diphosphonucleosides, and allosterically inhibited by phosphoenolpyruvate. Functionally, catalyzes the phosphorylation of D-fructose 6-phosphate to fructose 1,6-bisphosphate by ATP, the first committing step of glycolysis. The polypeptide is ATP-dependent 6-phosphofructokinase (Fusobacterium nucleatum subsp. nucleatum (strain ATCC 25586 / DSM 15643 / BCRC 10681 / CIP 101130 / JCM 8532 / KCTC 2640 / LMG 13131 / VPI 4355)).